The sequence spans 137 residues: Nucleoside diphosphate kinase (137 aa).

6 residues coordinate ATP: K9, F57, R85, T91, R102, and N112. H115 serves as the catalytic Pros-phosphohistidine intermediate.

This sequence belongs to the NDK family. In terms of assembly, homotetramer. It depends on Mg(2+) as a cofactor.

Its subcellular location is the cytoplasm. It catalyses the reaction a 2'-deoxyribonucleoside 5'-diphosphate + ATP = a 2'-deoxyribonucleoside 5'-triphosphate + ADP. The enzyme catalyses a ribonucleoside 5'-diphosphate + ATP = a ribonucleoside 5'-triphosphate + ADP. Functionally, major role in the synthesis of nucleoside triphosphates other than ATP. The ATP gamma phosphate is transferred to the NDP beta phosphate via a ping-pong mechanism, using a phosphorylated active-site intermediate. This Geotalea uraniireducens (strain Rf4) (Geobacter uraniireducens) protein is Nucleoside diphosphate kinase.